The sequence spans 365 residues: Aminomethyltransferase (365 aa).

Belongs to the GcvT family. In terms of assembly, the glycine cleavage system is composed of four proteins: P, T, L and H.

It carries out the reaction N(6)-[(R)-S(8)-aminomethyldihydrolipoyl]-L-lysyl-[protein] + (6S)-5,6,7,8-tetrahydrofolate = N(6)-[(R)-dihydrolipoyl]-L-lysyl-[protein] + (6R)-5,10-methylene-5,6,7,8-tetrahydrofolate + NH4(+). The glycine cleavage system catalyzes the degradation of glycine. This chain is Aminomethyltransferase, found in Natranaerobius thermophilus (strain ATCC BAA-1301 / DSM 18059 / JW/NM-WN-LF).